The primary structure comprises 875 residues: MNCRPLEKYDPKAFEDEIYTKWLKNNVFLPDNSLFEKFSMVAPPPNVTGVLHMGHALNFVLQDVLVRYKRMKRHNTLWLFGTDHAGIATQAVFERHLKKIGKSKDDFEREELVQEIFKLKDRHRGIIVNQINKLGASYDHSRERFTLDENLCKAVNKVFKDLYFKGLIYRGEYLVNLDPGSGSVVSDEEIEYKEVDGKLYFVKYFIDNSSFIEVATTRPETMFGDTAIAVNPNDERYKSLVGKEVTIPLTTKKIKVIADFYVDSAFGTGALKVTPAHDPNDFEISKRHNISKVNILTQDGKLNKNVPLQYQGLSAKDARFKIETELMEKGFLQDVKKHKQQVGHCYRSGEVIEPYLSTQWFVRMKPLADKALKALENGELKFYPKKWENTYKYWLSNIRDWCISRQLVWGHRIPVWYNVDTSELIVSDTDPSLDEKNMGKRFVQDPDVLDTWFSSWLWPFSSLGWPNVDVDFKNYYPTNTLITAYDIIFFWVARMVMAGLEFTGQVPFKDVYITPLLRDKQGKKMSKSLGNGIDPLDIINEYGSDSLRFTLSFLSVQGQDLNIDAKDFMFGAKFANKVFNASKFILLNLKNRKILNDLKFNDIDKWLLTSLNSTILGVESSFANYKYNEASKFVYEFFWNDFCDWYIEISKIDLNNENVDIQNMAISKLLFFLKKSLLILHPFIPFVTEKIYSEFAEKEDILALNEYPNFDIANNFQEEFEIFKVLKTFIIAIRTLKSEFNIPASVEIDVALKFDADFKYEAYFKANESIVKRMINFKNIFYNENYDGMLGVAAVGFEIYADVKSLIDKTKELIRLEKQLEKYKMLNISVSKKLENENFLMNAPKEIVESEKLKFVEFSSLINKINNYIINLKNL.

The short motif at 45-55 is the 'HIGH' region element; that stretch reads PNVTGVLHMGH. A 'KMSKS' region motif is present at residues 524 to 528; it reads KMSKS. Lys527 is an ATP binding site. Residues 803–837 adopt a coiled-coil conformation; the sequence is VKSLIDKTKELIRLEKQLEKYKMLNISVSKKLENE.

This sequence belongs to the class-I aminoacyl-tRNA synthetase family. ValS type 1 subfamily. As to quaternary structure, monomer.

It localises to the cytoplasm. It catalyses the reaction tRNA(Val) + L-valine + ATP = L-valyl-tRNA(Val) + AMP + diphosphate. In terms of biological role, catalyzes the attachment of valine to tRNA(Val). As ValRS can inadvertently accommodate and process structurally similar amino acids such as threonine, to avoid such errors, it has a 'posttransfer' editing activity that hydrolyzes mischarged Thr-tRNA(Val) in a tRNA-dependent manner. This chain is Valine--tRNA ligase, found in Borreliella burgdorferi (strain ATCC 35210 / DSM 4680 / CIP 102532 / B31) (Borrelia burgdorferi).